The following is a 239-amino-acid chain: Lactate utilization protein A 1 (239 aa).

The protein belongs to the LutA/YkgE family.

Is involved in L-lactate degradation and allows cells to grow with lactate as the sole carbon source. In Bacillus cereus (strain AH820), this protein is Lactate utilization protein A 1.